A 243-amino-acid polypeptide reads, in one-letter code: 7-carboxy-7-deazaguanine synthase (243 aa).

Substrate-binding positions include 9–11 and Arg24; that span reads IMG. Residues 15 to 243 enclose the Radical SAM core domain; it reads YIGRRFIFVR…IQMHKYLGML (229 aa). The [4Fe-4S] cluster site is built by Cys28, Cys32, and Cys35. Thr84 lines the substrate pocket. Gly86 lines the S-adenosyl-L-methionine pocket.

The protein belongs to the radical SAM superfamily. 7-carboxy-7-deazaguanine synthase family. Homodimer. The cofactor is [4Fe-4S] cluster. Requires S-adenosyl-L-methionine as cofactor. Mg(2+) serves as cofactor.

It catalyses the reaction 6-carboxy-5,6,7,8-tetrahydropterin + H(+) = 7-carboxy-7-deazaguanine + NH4(+). Its pathway is purine metabolism; 7-cyano-7-deazaguanine biosynthesis. Its function is as follows. Catalyzes the complex heterocyclic radical-mediated conversion of 6-carboxy-5,6,7,8-tetrahydropterin (CPH4) to 7-carboxy-7-deazaguanine (CDG), a step common to the biosynthetic pathways of all 7-deazapurine-containing compounds. The chain is 7-carboxy-7-deazaguanine synthase from Methanocaldococcus jannaschii (strain ATCC 43067 / DSM 2661 / JAL-1 / JCM 10045 / NBRC 100440) (Methanococcus jannaschii).